We begin with the raw amino-acid sequence, 480 residues long: Endo-1,6-beta-D-glucanase (480 aa).

The first 17 residues, Met1–Ala17, serve as a signal peptide directing secretion. Asn50 is a glycosylation site (N-linked (GlcNAc...) asparagine). Catalysis depends on Glu225, which acts as the Proton donor. Residue Glu321 is the Nucleophile of the active site.

Belongs to the glycosyl hydrolase 30 family.

The protein localises to the secreted. The catalysed reaction is Random hydrolysis of (1-&gt;6)-linkages in (1-&gt;6)-beta-D-glucans.. Its function is as follows. Partially degrades N.crassa cell wall beta-D-glucan, liberating small amounts of oligosaccharides. The sequence is that of Endo-1,6-beta-D-glucanase (neg-1) from Neurospora crassa (strain ATCC 24698 / 74-OR23-1A / CBS 708.71 / DSM 1257 / FGSC 987).